The primary structure comprises 436 residues: GTPase Der (436 aa).

EngA-type G domains follow at residues 4–167 (PVVA…PKEE) and 176–351 (VKFS…DNHS). GTP-binding positions include 10–17 (GRPNVGKS), 57–61 (DTGGI), 119–122 (NKVD), 182–189 (GRPNVGKS), 229–233 (DTAGM), and 294–297 (NKWD). Residues 352–436 (LRVQSSMLND…PIRVIARKRK (85 aa)) form the KH-like domain.

The protein belongs to the TRAFAC class TrmE-Era-EngA-EngB-Septin-like GTPase superfamily. EngA (Der) GTPase family. As to quaternary structure, associates with the 50S ribosomal subunit.

Its function is as follows. GTPase that plays an essential role in the late steps of ribosome biogenesis. The protein is GTPase Der of Listeria monocytogenes serotype 4b (strain F2365).